The chain runs to 259 residues: uncharacterized protein (259 aa).

The signal sequence occupies residues 1–22 (MKHSKKLLLCISFLLITVFISG). Residue Cys23 is the site of N-palmitoyl cysteine attachment. Cys23 carries the S-diacylglycerol cysteine lipid modification.

The protein belongs to the staphylococcal tandem lipoprotein family.

It is found in the cell membrane. This is an uncharacterized protein from Staphylococcus epidermidis (strain ATCC 35984 / DSM 28319 / BCRC 17069 / CCUG 31568 / BM 3577 / RP62A).